The sequence spans 76 residues: uncharacterized protein (76 aa).

The next 3 helical transmembrane spans lie at 1–21 (MTAI…HLQL), 35–55 (CFDI…LLII), and 56–76 (NNKF…NTMI).

Its subcellular location is the cell membrane. This is an uncharacterized protein from Borreliella burgdorferi (strain ATCC 35210 / DSM 4680 / CIP 102532 / B31) (Borrelia burgdorferi).